The primary structure comprises 403 residues: Tryptophan synthase beta chain (403 aa).

At Lys96 the chain carries N6-(pyridoxal phosphate)lysine.

Belongs to the TrpB family. As to quaternary structure, tetramer of two alpha and two beta chains. Requires pyridoxal 5'-phosphate as cofactor.

It catalyses the reaction (1S,2R)-1-C-(indol-3-yl)glycerol 3-phosphate + L-serine = D-glyceraldehyde 3-phosphate + L-tryptophan + H2O. It participates in amino-acid biosynthesis; L-tryptophan biosynthesis; L-tryptophan from chorismate: step 5/5. Its function is as follows. The beta subunit is responsible for the synthesis of L-tryptophan from indole and L-serine. This Ralstonia nicotianae (strain ATCC BAA-1114 / GMI1000) (Ralstonia solanacearum) protein is Tryptophan synthase beta chain.